The chain runs to 148 residues: Large ribosomal subunit protein uL22 (148 aa).

This sequence belongs to the universal ribosomal protein uL22 family. In terms of assembly, part of the 50S ribosomal subunit.

In terms of biological role, this protein binds specifically to 23S rRNA; its binding is stimulated by other ribosomal proteins, e.g. L4, L17, and L20. It is important during the early stages of 50S assembly. It makes multiple contacts with different domains of the 23S rRNA in the assembled 50S subunit and ribosome. Functionally, the globular domain of the protein is located near the polypeptide exit tunnel on the outside of the subunit, while an extended beta-hairpin is found that lines the wall of the exit tunnel in the center of the 70S ribosome. The protein is Large ribosomal subunit protein uL22 of Thermosipho africanus (strain TCF52B).